A 285-amino-acid polypeptide reads, in one-letter code: Dermonecrotic toxin LlSicTox-alphaIII1ii (285 aa).

His-12 is a catalytic residue. Mg(2+) contacts are provided by Glu-32 and Asp-34. Catalysis depends on His-47, which acts as the Nucleophile. A disulfide bridge links Cys-51 with Cys-57. Asp-91 serves as a coordination point for Mg(2+).

This sequence belongs to the arthropod phospholipase D family. Class I subfamily. The cofactor is Mg(2+). Expressed by the venom gland.

The protein localises to the secreted. The catalysed reaction is an N-(acyl)-sphingosylphosphocholine = an N-(acyl)-sphingosyl-1,3-cyclic phosphate + choline. It carries out the reaction an N-(acyl)-sphingosylphosphoethanolamine = an N-(acyl)-sphingosyl-1,3-cyclic phosphate + ethanolamine. The enzyme catalyses a 1-acyl-sn-glycero-3-phosphocholine = a 1-acyl-sn-glycero-2,3-cyclic phosphate + choline. It catalyses the reaction a 1-acyl-sn-glycero-3-phosphoethanolamine = a 1-acyl-sn-glycero-2,3-cyclic phosphate + ethanolamine. In terms of biological role, dermonecrotic toxins cleave the phosphodiester linkage between the phosphate and headgroup of certain phospholipids (sphingolipid and lysolipid substrates), forming an alcohol (often choline) and a cyclic phosphate. This toxin acts on sphingomyelin (SM) with high activity (56.8 U/mg). It may also act on ceramide phosphoethanolamine (CPE), lysophosphatidylcholine (LPC) and lysophosphatidylethanolamine (LPE), but not on lysophosphatidylserine (LPS), and lysophosphatidylglycerol (LPG). It acts by transphosphatidylation, releasing exclusively cyclic phosphate products as second products. Induces dermonecrosis, hemolysis, increased vascular permeability, edema, inflammatory response, and platelet aggregation. Is lethal to mice. This is Dermonecrotic toxin LlSicTox-alphaIII1ii from Loxosceles laeta (South American recluse spider).